A 427-amino-acid polypeptide reads, in one-letter code: Glutamate-1-semialdehyde 2,1-aminomutase (427 aa).

Lysine 268 bears the N6-(pyridoxal phosphate)lysine mark.

It belongs to the class-III pyridoxal-phosphate-dependent aminotransferase family. HemL subfamily. Pyridoxal 5'-phosphate serves as cofactor.

The protein resides in the cytoplasm. It catalyses the reaction (S)-4-amino-5-oxopentanoate = 5-aminolevulinate. Its pathway is porphyrin-containing compound metabolism; protoporphyrin-IX biosynthesis; 5-aminolevulinate from L-glutamyl-tRNA(Glu): step 2/2. The polypeptide is Glutamate-1-semialdehyde 2,1-aminomutase (Methanococcus maripaludis (strain C7 / ATCC BAA-1331)).